The primary structure comprises 1019 residues: Probable LRR receptor-like serine/threonine-protein kinase At1g29720 (1019 aa).

An N-terminal signal peptide occupies residues 1-19 (MSIILWSFFLFFTIILSSL). At 20–615 (TNITTLASFS…EKTKHHIKYP (596 aa)) the chain is on the extracellular side. N-linked (GlcNAc...) asparagine glycans are attached at residues Asn21, Asn79, and Asn90. 13 LRR repeats span residues 93–117 (ICRI…LTKL), 118–141 (PYLK…WAKM), 143–165 (YLTS…LQNF), 166–189 (KNLT…LGNL), 190–212 (TSLT…TLAR), 214–236 (VNLE…YIGN), 237–261 (WTRL…VVRL), 263–283 (NLLE…NLSS), 284–307 (KGLK…IWNL), 308–330 (TDLK…VQNP), 332–351 (KNIY…GGLL), 352–374 (NSQS…QKGS), and 375–398 (TINT…AVPA). Residues Asn153, Asn167, and Asn188 are each glycosylated (N-linked (GlcNAc...) asparagine). 2 N-linked (GlcNAc...) asparagine glycosylation sites follow: Asn225 and Asn236. 2 N-linked (GlcNAc...) asparagine glycosylation sites follow: Asn280 and Asn306. Residues Asn363, Asn387, Asn469, and Asn558 are each glycosylated (N-linked (GlcNAc...) asparagine). A helical transmembrane segment spans residues 616–636 (LILGASGALVTIVLLAVGIYA). Residues 637-1019 (RGIYRRDNNR…STVENSSSSL (383 aa)) lie on the Cytoplasmic side of the membrane. Positions 673-946 (FDQANKLGEG…EAVKMLEGEI (274 aa)) constitute a Protein kinase domain. Residues 679–687 (LGEGGFGSV) and Lys701 each bind ATP. At Tyr746 the chain carries Phosphotyrosine. The active-site Proton acceptor is Asp797. Ser830 bears the Phosphoserine mark. Thr831 and Thr836 each carry phosphothreonine. Tyr844 carries the phosphotyrosine modification.

Belongs to the protein kinase superfamily. Ser/Thr protein kinase family.

It localises to the cell membrane. It catalyses the reaction L-seryl-[protein] + ATP = O-phospho-L-seryl-[protein] + ADP + H(+). The catalysed reaction is L-threonyl-[protein] + ATP = O-phospho-L-threonyl-[protein] + ADP + H(+). The chain is Probable LRR receptor-like serine/threonine-protein kinase At1g29720 (RFK1) from Arabidopsis thaliana (Mouse-ear cress).